A 412-amino-acid chain; its full sequence is MIVINKEDCIRCGACQGVCPTGAISVKPEDVIYCDMCGGEPKCVEACPNDALRHEDITLEGGIKKKKITYSPEKCDKCGECVKVCPPGILKLVNDGKASRVPLEGFCVLCQQCVNVCPIEVIGIEGVKEPARVEIKIDKPIYIVDCVGCGLCVPECPVNAITLPKYGESIEIDEEKCIKCGICAQTCPWNSVYISGKKPQKSSRTIENFTLDKEECIGCNTCVEICPGGFIEPKSDLTVSLPEICPACGLCEKLCPTDAIELEVKLGPAKPVTEEGIVYNDENCKFCGRCALNCPNEAIRVVSPKGRVFPGLKKVDEKESYTICTTCGACTTVCPTGALKLVEVSKKVNGETVKRNRIQYNPSLCDKCGNCVDVCPYGILKLTDDEKLPVKGFCILCEKCIDACRFNALLIK.

4Fe-4S ferredoxin-type domains follow at residues 2 to 29 (IVIN…VKPE), 30 to 57 (DVIY…HEDI), 66 to 95 (KKIT…LVND), 96 to 127 (GKAS…IEGV), 138 to 166 (DKPI…LPKY), 168 to 197 (ESIE…ISGK), 207 to 236 (ENFT…PKSD), 237 to 265 (LTVS…LEVK), 275 to 304 (EGIV…VVSP), 311 to 344 (GLKK…LVEV), 356 to 385 (NRIQ…LTDD), and 386 to 412 (EKLP…LLIK). Positions 9, 12, 15, and 19 each coordinate [4Fe-4S] cluster. C75, C78, C81, C85, C107, C110, C113, C117, C146, C149, C152, C156, C177, C180, C183, C187, C216, C219, C222, C226, C245, C248, C251, C255, C284, C287, C290, C294, C324, C327, C330, C334, C365, C368, C371, and C375 together coordinate [4Fe-4S] cluster.

Requires [4Fe-4S] cluster as cofactor.

The sequence is that of Polyferredoxin protein MvhB (mvhB) from Methanothermus fervidus.